The primary structure comprises 341 residues: Syntaxin-122 (341 aa).

Met1 carries the N-acetylmethionine modification. Disordered stretches follow at residues 1-22 (MNDL…PPHS) and 111-137 (LDRA…RTSV). The Cytoplasmic portion of the chain corresponds to 1-284 (MNDLLSGSFK…ARFYQKNTRK (284 aa)). 2 stretches are compositionally biased toward polar residues: residues 8–21 (SFKT…SPPH) and 126–137 (PGSSSDRQRTSV). Positions 64–185 (CHNLRSSNEQ…GEYPDEATLE (122 aa)) form a coiled coil. The t-SNARE coiled-coil homology domain maps to 213-275 (INEIQERHDA…RSGADRLVKA (63 aa)). The chain crosses the membrane as a helical; Anchor for type IV membrane protein span at residues 285 to 305 (WTCFAILLLLIIVVLIVVFTV). The Vesicular portion of the chain corresponds to 306 to 341 (KPWESNGGGGGGAPRQATPVQAQPPPPPAVNRRLLR). The disordered stretch occupies residues 312-341 (GGGGGGAPRQATPVQAQPPPPPAVNRRLLR).

The protein belongs to the syntaxin family. Part of the t-SNARE complex.

The protein localises to the membrane. Functionally, vesicle trafficking protein that functions in the secretory pathway. This chain is Syntaxin-122 (SYP122), found in Arabidopsis thaliana (Mouse-ear cress).